Consider the following 321-residue polypeptide: Thioredoxin reductase (321 aa).

An FAD-binding site is contributed by 36–43; that stretch reads TGMEKGGQ. A disulfide bridge connects residues cysteine 136 and cysteine 139. 287-296 contacts FAD; that stretch reads DVMDHIYRQA.

It belongs to the class-II pyridine nucleotide-disulfide oxidoreductase family. As to quaternary structure, homodimer. FAD is required as a cofactor.

It localises to the cytoplasm. It catalyses the reaction [thioredoxin]-dithiol + NADP(+) = [thioredoxin]-disulfide + NADPH + H(+). This chain is Thioredoxin reductase (trxB), found in Escherichia coli O157:H7.